A 467-amino-acid polypeptide reads, in one-letter code: Adenosylhomocysteinase (467 aa).

Substrate-binding residues include Thr68, Asp144, and Glu169. 170–172 (TTT) contacts NAD(+). Substrate-binding residues include Lys199 and Asp203. NAD(+) contacts are provided by residues Asn204, 233 to 238 (GYGDVG), Glu256, Asn305, 326 to 328 (IGH), and Asn373.

This sequence belongs to the adenosylhomocysteinase family. Requires NAD(+) as cofactor.

The protein localises to the cytoplasm. The catalysed reaction is S-adenosyl-L-homocysteine + H2O = L-homocysteine + adenosine. The protein operates within amino-acid biosynthesis; L-homocysteine biosynthesis; L-homocysteine from S-adenosyl-L-homocysteine: step 1/1. May play a key role in the regulation of the intracellular concentration of adenosylhomocysteine. This is Adenosylhomocysteinase from Acinetobacter baylyi (strain ATCC 33305 / BD413 / ADP1).